The sequence spans 1041 residues: Leucine-rich repeat receptor-like protein kinase TDR (1041 aa).

An N-terminal signal peptide occupies residues 1 to 29 (MKKKNISPSLVLHPLLLLLLPFFAFNSLA). Residues 30 to 652 (LKFSPQLLSL…HHKEERPKKT (623 aa)) are Extracellular-facing. Cysteines 69 and 76 form a disulfide. Asparagine 78, asparagine 92, and asparagine 111 each carry an N-linked (GlcNAc...) asparagine glycan. LRR repeat units lie at residues 80 to 104 (TAQV…IRYL), 105 to 128 (SSLL…IFDL), 130 to 152 (KLTT…ISKL), 154 to 176 (FLKV…VSRL), 177 to 199 (RFLE…AYGG), 200 to 224 (LQRL…LGLL), 225 to 248 (TELQ…FALL), 250 to 272 (NLKY…LGNL), 273 to 296 (SNLE…YSNL), 297 to 319 (KSLK…GFST), 321 to 344 (KNLT…IGEL), 345 to 368 (PELT…LGSN), 369 to 392 (GKLE…LCHG), 394 to 416 (KLYK…LTRC), 418 to 439 (SLWR…GFGS), 440 to 464 (LRNL…FATA), 466 to 488 (VLQY…IWKA), 511 to 535 (CKSF…IGHC), 536 to 558 (EKLL…EIST), 559 to 583 (LPSI…FGSS), and 585 to 607 (TITT…SFAH). The interval 186 to 188 (GSY) is CLE peptide binding. A CLE peptide binding region spans residues 233–235 (GYN). Asparagine 258 and asparagine 271 each carry an N-linked (GlcNAc...) asparagine glycan. Positions 303 to 307 (DFSSN) are CLE peptide binding. N-linked (GlcNAc...) asparagine glycans are attached at residues asparagine 322, asparagine 332, and asparagine 356. The CLE peptide binding stretch occupies residues 375–377 (DVS). Asparagine 378 carries an N-linked (GlcNAc...) asparagine glycan. The cysteines at positions 390 and 416 are disulfide-linked. The CLE peptide binding stretch occupies residues 421–423 (RFR). N-linked (GlcNAc...) asparagine glycans are attached at residues asparagine 430, asparagine 442, asparagine 471, asparagine 525, and asparagine 542. A disulfide bond links cysteine 511 and cysteine 535. A glycan (N-linked (GlcNAc...) asparagine) is linked at asparagine 590. Cysteine 620 and cysteine 628 are disulfide-bonded. The helical transmembrane segment at 653 to 673 (AGAIVWILAAAIGVGFFVLVA) threads the bilayer. The Cytoplasmic segment spans residues 674–1041 (ATRCFQKSYG…HDVKCQRIGV (368 aa)). Threonine 710 carries the post-translational modification Phosphothreonine. A Protein kinase domain is found at 719 to 1001 (SKTDNILGMG…DVLLILQEAK (283 aa)). ATP is bound by residues 725–733 (LGMGSTGTV) and lysine 747. A phosphotyrosine mark is found at tyrosine 798 and tyrosine 839. The active-site Proton acceptor is aspartate 852. The residue at position 884 (serine 884) is a Phosphoserine. A phosphotyrosine mark is found at tyrosine 892 and tyrosine 899. Threonine 900 carries the post-translational modification Phosphothreonine.

The protein belongs to the protein kinase superfamily. Ser/Thr protein kinase family. As to quaternary structure, interacts specifically with the mature peptides CLE41p and CLE44p, especially in the presence of SERK2. Interacts with LURE1.2. Widely expressed along the vascular strands. In roots and hypocotyls, confined to procambial cells.

It localises to the cell membrane. It carries out the reaction L-seryl-[protein] + ATP = O-phospho-L-seryl-[protein] + ADP + H(+). It catalyses the reaction L-threonyl-[protein] + ATP = O-phospho-L-threonyl-[protein] + ADP + H(+). Acts with CLE41p and CLE44p peptides as a ligand-receptor pair in a signal transduction pathway involved in the regulation of procambium maintenance and polarity during vascular-tissue development. Mediates repression of tracheary element differentiation and the promotion of procambial cells formation and polar division adjacent to phloem cells in the veins. The sequence is that of Leucine-rich repeat receptor-like protein kinase TDR from Arabidopsis thaliana (Mouse-ear cress).